The following is a 403-amino-acid chain: Nucleoporin nup44 (403 aa).

2 stretches are compositionally biased toward polar residues: residues 1 to 31 and 67 to 124; these read MAFS…TTKP and FGKT…DETN. Residues 1–124 are disordered; the sequence is MAFSFGQQGS…NPTKPVDETN (124 aa).

The protein localises to the cytoplasm. It localises to the nucleus. Functionally, functions as a component of the nuclear pore complex (NPC). NPC components, collectively referred to as nucleoporins (NUPs), can play the role of both NPC structural components and of docking or interaction partners for transiently associated nuclear transport factors. Active directional transport is assured by both, a Phe-Gly (FG) repeat affinity gradient for these transport factors across the NPC and a transport cofactor concentration gradient across the nuclear envelope. The chain is Nucleoporin nup44 (nup44) from Schizosaccharomyces pombe (strain 972 / ATCC 24843) (Fission yeast).